The following is a 343-amino-acid chain: Protein FAM50A-B (343 aa).

Disordered regions lie at residues 1–25 (MAQY…EKQR) and 125–181 (EEDE…EEEN). Residues 125–142 (EEDEECEDEESEEEEEEY) show a composition bias toward acidic residues. A compositionally biased stretch (basic and acidic residues) spans 172 to 181 (PDRDREEEEN).

The protein belongs to the FAM50 family.

It localises to the nucleus. Probably involved in the regulation of pre-mRNA splicing. The sequence is that of Protein FAM50A-B (fam50a-b) from Xenopus laevis (African clawed frog).